Consider the following 130-residue polypeptide: Small ribosomal subunit protein uS8 (130 aa).

The protein belongs to the universal ribosomal protein uS8 family. In terms of assembly, part of the 30S ribosomal subunit. Contacts proteins S5 and S12.

One of the primary rRNA binding proteins, it binds directly to 16S rRNA central domain where it helps coordinate assembly of the platform of the 30S subunit. The polypeptide is Small ribosomal subunit protein uS8 (Shewanella loihica (strain ATCC BAA-1088 / PV-4)).